A 311-amino-acid polypeptide reads, in one-letter code: Methionyl-tRNA formyltransferase (311 aa).

Ser112–Pro115 lines the (6S)-5,6,7,8-tetrahydrofolate pocket.

This sequence belongs to the Fmt family.

It catalyses the reaction L-methionyl-tRNA(fMet) + (6R)-10-formyltetrahydrofolate = N-formyl-L-methionyl-tRNA(fMet) + (6S)-5,6,7,8-tetrahydrofolate + H(+). Its function is as follows. Attaches a formyl group to the free amino group of methionyl-tRNA(fMet). The formyl group appears to play a dual role in the initiator identity of N-formylmethionyl-tRNA by promoting its recognition by IF2 and preventing the misappropriation of this tRNA by the elongation apparatus. This chain is Methionyl-tRNA formyltransferase, found in Geobacter metallireducens (strain ATCC 53774 / DSM 7210 / GS-15).